The chain runs to 653 residues: Fructose-1,6-bisphosphatase class 3 (653 aa).

This sequence belongs to the FBPase class 3 family. It depends on Mn(2+) as a cofactor.

The enzyme catalyses beta-D-fructose 1,6-bisphosphate + H2O = beta-D-fructose 6-phosphate + phosphate. It participates in carbohydrate biosynthesis; gluconeogenesis. In Listeria monocytogenes serovar 1/2a (strain ATCC BAA-679 / EGD-e), this protein is Fructose-1,6-bisphosphatase class 3.